A 414-amino-acid polypeptide reads, in one-letter code: Transforming growth factor beta-2 proprotein (414 aa).

The signal sequence occupies residues 1-19; it reads MHYCVLSAFLILHLVTVAL. 3 N-linked (GlcNAc...) asparagine glycosylation sites follow: N72, N140, and N241. 4 disulfides stabilise this stretch: C309–C318, C317–C380, C346–C411, and C350–C413.

This sequence belongs to the TGF-beta family. As to quaternary structure, interacts with the serine proteases, HTRA1 and HTRA3. Interacts with ASPN. Interacts with MFAP5. Interacts with Transforming growth factor beta-2 (TGF-beta-2) chain; interaction is non-covalent and maintains (TGF-beta-2) in a latent state. Interacts with LRRC32/GARP; leading to regulate activation of TGF-beta-2. Interacts with NREP; the interaction results in a decrease in TGFB2 autoinduction. In terms of assembly, transforming growth factor beta-2: Homodimer; disulfide-linked. Transforming growth factor beta-2: Interacts with TGF-beta receptors (TGFBR1 and TGFBR2), leading to signal transduction. The precursor proprotein is cleaved in the Golgi apparatus to form Transforming growth factor beta-2 (TGF-beta-2) and Latency-associated peptide (LAP) chains, which remain non-covalently linked, rendering TGF-beta-2 inactive.

It is found in the secreted. The protein localises to the extracellular space. Its subcellular location is the extracellular matrix. Precursor of the Latency-associated peptide (LAP) and Transforming growth factor beta-2 (TGF-beta-2) chains, which constitute the regulatory and active subunit of TGF-beta-2, respectively. In terms of biological role, required to maintain the Transforming growth factor beta-2 (TGF-beta-2) chain in a latent state during storage in extracellular matrix. Associates non-covalently with TGF-beta-2 and regulates its activation via interaction with 'milieu molecules', such as LTBP1 and LRRC32/GARP, that control activation of TGF-beta-2. Functionally, multifunctional protein that regulates various processes such as angiogenesis and heart development. Activation into mature form follows different steps: following cleavage of the proprotein in the Golgi apparatus, Latency-associated peptide (LAP) and Transforming growth factor beta-2 (TGF-beta-2) chains remain non-covalently linked rendering TGF-beta-2 inactive during storage in extracellular matrix. At the same time, LAP chain interacts with 'milieu molecules', such as LTBP1 and LRRC32/GARP, that control activation of TGF-beta-2 and maintain it in a latent state during storage in extracellular milieus. Once activated following release of LAP, TGF-beta-2 acts by binding to TGF-beta receptors (TGFBR1 and TGFBR2), which transduce signal. In Chlorocebus aethiops (Green monkey), this protein is Transforming growth factor beta-2 proprotein (TGFB2).